The following is a 65-amino-acid chain: Omega-lycotoxin-Am1f (65 aa).

The propeptide occupies 1–18 (GDEEDEVEETLPVAEEGR). 4 disulfide bridges follow: Cys-22/Cys-37, Cys-29/Cys-42, Cys-36/Cys-62, and Cys-44/Cys-60.

Belongs to the neurotoxin omega-lctx family. Expressed by the venom gland.

The protein resides in the secreted. Functionally, modulates Cav2.1/CACNA1A voltage-gated calcium channels (P/Q-type currents) in rat cerebellar Purkinje cells and hippocampal CA1-CA3 neurons. At saturating concentrations (&gt;10 nM) decelerates activation kinetics and slightly increases peak amplitude without affecting deactivation kinetics. In vivo, does not cause death when intravenously injected into mice. In rat models, through its activity on Cav2.1/CACNA1A, has an ameliorative effect on memory defects provoked by hyperstimulation of N-methyl-D-aspartate receptors (NMDARs) in the hippocampus. This is Omega-lycotoxin-Am1f from Alopecosa marikovskyi (Wolf spider).